The primary structure comprises 261 residues: tRNA pseudouridine synthase A (261 aa).

Residue Asp53 is the Nucleophile of the active site. Tyr111 provides a ligand contact to substrate.

It belongs to the tRNA pseudouridine synthase TruA family. As to quaternary structure, homodimer.

The catalysed reaction is uridine(38/39/40) in tRNA = pseudouridine(38/39/40) in tRNA. In terms of biological role, formation of pseudouridine at positions 38, 39 and 40 in the anticodon stem and loop of transfer RNAs. The sequence is that of tRNA pseudouridine synthase A from Shouchella clausii (strain KSM-K16) (Alkalihalobacillus clausii).